The sequence spans 387 residues: MSVNHGQGNKDLAKTLLVMAGGTGGHIFPGIAVADELKAQGWKIHWLGTADRMEAQIVPMHGYDISFINISGLRGKNLLTTLVMPFKLLRSLFQARRVIKTVKPDVVIGMGGYASAPGGLAAWLSKIPLIVHEQNAAAGLSNRLLARIANKVCCAFPNAFVSGIDVEVVGNPLRASIGQQALVSENIDQSHEGSKNILVVGGSLGAQVLNKVMPDSFKDLSESDEKYCIWHQTGDNNQALVTASYKQEYIDTGKVRVTEFITDIAAAYQWADIVICRAGALTVSELAMAATPAIFVPLPHAVDDHQTKNALYLVKRDAAKLLPQAELNNESITSLIIELFDQPQTLADMAKASLSAATSDASQKVAKLCQQLSISNGAKLRNNEEKI.

UDP-N-acetyl-alpha-D-glucosamine-binding positions include 23 to 25, Asn135, Arg174, Ser203, Ile261, 280 to 285, and Gln306; these read TGG and ALTVSE.

It belongs to the glycosyltransferase 28 family. MurG subfamily.

It is found in the cell inner membrane. The catalysed reaction is di-trans,octa-cis-undecaprenyl diphospho-N-acetyl-alpha-D-muramoyl-L-alanyl-D-glutamyl-meso-2,6-diaminopimeloyl-D-alanyl-D-alanine + UDP-N-acetyl-alpha-D-glucosamine = di-trans,octa-cis-undecaprenyl diphospho-[N-acetyl-alpha-D-glucosaminyl-(1-&gt;4)]-N-acetyl-alpha-D-muramoyl-L-alanyl-D-glutamyl-meso-2,6-diaminopimeloyl-D-alanyl-D-alanine + UDP + H(+). It participates in cell wall biogenesis; peptidoglycan biosynthesis. In terms of biological role, cell wall formation. Catalyzes the transfer of a GlcNAc subunit on undecaprenyl-pyrophosphoryl-MurNAc-pentapeptide (lipid intermediate I) to form undecaprenyl-pyrophosphoryl-MurNAc-(pentapeptide)GlcNAc (lipid intermediate II). The chain is UDP-N-acetylglucosamine--N-acetylmuramyl-(pentapeptide) pyrophosphoryl-undecaprenol N-acetylglucosamine transferase from Colwellia psychrerythraea (strain 34H / ATCC BAA-681) (Vibrio psychroerythus).